The following is a 270-amino-acid chain: uncharacterized protein (270 aa).

The first 22 residues, 1–22 (MEYIKKLLCTMSVLLLIIFIGG), serve as a signal peptide directing secretion. Residue Cys-23 is the site of N-palmitoyl cysteine attachment. Cys-23 carries S-diacylglycerol cysteine lipidation.

It belongs to the staphylococcal tandem lipoprotein family.

Its subcellular location is the cell membrane. This is an uncharacterized protein from Staphylococcus aureus (strain bovine RF122 / ET3-1).